Here is a 249-residue protein sequence, read N- to C-terminus: Salivary antigen-5 (249 aa).

Positions 1–26 (MAKTQCPLVFSLLALALIGTLQSSAA) are cleaved as a signal peptide. Positions 50–193 (SIHNYYRNLT…WYAGYLVCNY (144 aa)) constitute an SCP domain. Asn57, Asn127, and Asn168 each carry an N-linked (GlcNAc...) asparagine glycan.

It belongs to the CRISP family. Venom allergen 5-like subfamily. As to quaternary structure, monomeric in solution. Cu(2+) is required as a cofactor. Saliva (at protein level). Salivary gland (at protein level).

The protein localises to the secreted. Functionally, antioxidant protein that scavenges superoxide radicals. Removes superoxide radicals produced by PMA-stimulated host neutrophils. Inhibits host platelet aggregation induced by low doses of collagen by interfering with the pro-aggregatory properties of reactive oxygen species on platelets. Binds to heparin and sulfated glycosaminoglycans. This is Salivary antigen-5 from Dipetalogaster maximus (Blood-sucking bug).